The following is a 634-amino-acid chain: UPF0313 protein PG_0934 (634 aa).

Residues 302-582 enclose the Radical SAM core domain; sequence AYEMIKHSVN…RQHMFFFWYK (281 aa). The [4Fe-4S] cluster site is built by Cys-316, Cys-320, and Cys-323. Residues 607–634 form a disordered region; sequence DRTTSSRNDRHTPPSTQPRKSKSKSRHS. Basic residues predominate over residues 625-634; sequence RKSKSKSRHS.

Belongs to the UPF0313 family. The cofactor is [4Fe-4S] cluster.

In Porphyromonas gingivalis (strain ATCC BAA-308 / W83), this protein is UPF0313 protein PG_0934.